Here is an 808-residue protein sequence, read N- to C-terminus: Type VI secretion system spike protein VgrG4b (808 aa).

It belongs to the VgrG protein family.

It localises to the secreted. Part of the H2 type VI secretion system (H2-T6SS) specialized secretion system, which delivers several virulence factors in both prokaryotic and eukaryotic cells during infection. Allows the delivery of the phospholipase effector PldA to target cells where it exerts its toxicity. In Pseudomonas aeruginosa (strain ATCC 15692 / DSM 22644 / CIP 104116 / JCM 14847 / LMG 12228 / 1C / PRS 101 / PAO1), this protein is Type VI secretion system spike protein VgrG4b.